Reading from the N-terminus, the 389-residue chain is Probable serine/threonine-protein kinase PBL24 (389 aa).

Positions 1 to 36 (MSCFLGPSTNNKSRENEGSSMAAPYEQQNLPRNDRR) are disordered. Cysteine 3 is lipidated: S-palmitoyl cysteine. A Protein kinase domain is found at 71 to 348 (FRQEFLIGEG…SDVVTALSFM (278 aa)). ATP contacts are provided by residues 77 to 85 (IGEGGFGRV) and lysine 100. Aspartate 198 functions as the Proton acceptor in the catalytic mechanism. 2 positions are modified to phosphoserine: serine 202 and serine 232. Threonine 238 bears the Phosphothreonine mark. Tyrosine 246 carries the post-translational modification Phosphotyrosine.

It belongs to the protein kinase superfamily. Ser/Thr protein kinase family.

The protein localises to the cell membrane. It catalyses the reaction L-seryl-[protein] + ATP = O-phospho-L-seryl-[protein] + ADP + H(+). The catalysed reaction is L-threonyl-[protein] + ATP = O-phospho-L-threonyl-[protein] + ADP + H(+). May be involved in plant defense signaling. This Arabidopsis thaliana (Mouse-ear cress) protein is Probable serine/threonine-protein kinase PBL24.